A 279-amino-acid polypeptide reads, in one-letter code: Urease accessory protein UreD (279 aa).

Belongs to the UreD family. UreD, UreF and UreG form a complex that acts as a GTP-hydrolysis-dependent molecular chaperone, activating the urease apoprotein by helping to assemble the nickel containing metallocenter of UreC. The UreE protein probably delivers the nickel.

The protein resides in the cytoplasm. Required for maturation of urease via the functional incorporation of the urease nickel metallocenter. This is Urease accessory protein UreD from Paracoccus denitrificans (strain Pd 1222).